The sequence spans 687 residues: DNA ligase (687 aa).

NAD(+) is bound by residues 34-38 (DAEYD), 83-84 (SL), and Glu-117. Catalysis depends on Lys-119, which acts as the N6-AMP-lysine intermediate. Arg-140, Glu-182, Lys-298, and Lys-322 together coordinate NAD(+). The Zn(2+) site is built by Cys-416, Cys-419, Cys-434, and Cys-439. The region spanning 609–687 (EARGPFAGKT…EEEFVRLLKE (79 aa)) is the BRCT domain.

This sequence belongs to the NAD-dependent DNA ligase family. LigA subfamily. The cofactor is Mg(2+). Mn(2+) serves as cofactor.

It carries out the reaction NAD(+) + (deoxyribonucleotide)n-3'-hydroxyl + 5'-phospho-(deoxyribonucleotide)m = (deoxyribonucleotide)n+m + AMP + beta-nicotinamide D-nucleotide.. DNA ligase that catalyzes the formation of phosphodiester linkages between 5'-phosphoryl and 3'-hydroxyl groups in double-stranded DNA using NAD as a coenzyme and as the energy source for the reaction. It is essential for DNA replication and repair of damaged DNA. This chain is DNA ligase, found in Anaeromyxobacter dehalogenans (strain 2CP-1 / ATCC BAA-258).